A 428-amino-acid chain; its full sequence is Serine--tRNA ligase (428 aa).

An L-serine-binding site is contributed by 235–237 (TAE). ATP is bound at residue 266–268 (RSE). Glutamate 289 lines the L-serine pocket. 353-356 (EISS) is a binding site for ATP. Serine 389 serves as a coordination point for L-serine.

It belongs to the class-II aminoacyl-tRNA synthetase family. Type-1 seryl-tRNA synthetase subfamily. In terms of assembly, homodimer. The tRNA molecule binds across the dimer.

The protein localises to the cytoplasm. It carries out the reaction tRNA(Ser) + L-serine + ATP = L-seryl-tRNA(Ser) + AMP + diphosphate + H(+). The catalysed reaction is tRNA(Sec) + L-serine + ATP = L-seryl-tRNA(Sec) + AMP + diphosphate + H(+). The protein operates within aminoacyl-tRNA biosynthesis; selenocysteinyl-tRNA(Sec) biosynthesis; L-seryl-tRNA(Sec) from L-serine and tRNA(Sec): step 1/1. Its function is as follows. Catalyzes the attachment of serine to tRNA(Ser). Is also able to aminoacylate tRNA(Sec) with serine, to form the misacylated tRNA L-seryl-tRNA(Sec), which will be further converted into selenocysteinyl-tRNA(Sec). The sequence is that of Serine--tRNA ligase from Shewanella woodyi (strain ATCC 51908 / MS32).